The following is a 66-amino-acid chain: Large ribosomal subunit protein bL33 (66 aa).

This sequence belongs to the bacterial ribosomal protein bL33 family.

The chain is Large ribosomal subunit protein bL33 from Wolbachia pipientis wMel.